Consider the following 366-residue polypeptide: CRS2-associated factor 2, mitochondrial (366 aa).

Residues 1–14 (MLLPRDLLLLPWRR) constitute a mitochondrion transit peptide. The interval 24–82 (RRLNHHRAPPFSDPDDDPPFTRLAERPPRAPSKKKKKEEEDQGGRIRPPEPASSDLPFD) is disordered. Positions 60–71 (KEEEDQGGRIRP) are enriched in basic and acidic residues. 2 consecutive CRM domains span residues 143-241 (EPLA…QRPQ) and 263-359 (DGLT…SVSL).

Part of large ribonucleo-protein complexes that include group IIB introns.

Its subcellular location is the mitochondrion. In terms of biological role, may be involved in the splicing of group IIB introns in mitochondria. This is CRS2-associated factor 2, mitochondrial from Oryza sativa subsp. japonica (Rice).